The sequence spans 466 residues: ATP synthase subunit beta (466 aa).

156–163 (GGAGVGKT) provides a ligand contact to ATP.

It belongs to the ATPase alpha/beta chains family. As to quaternary structure, F-type ATPases have 2 components, CF(1) - the catalytic core - and CF(0) - the membrane proton channel. CF(1) has five subunits: alpha(3), beta(3), gamma(1), delta(1), epsilon(1). CF(0) has three main subunits: a(1), b(2) and c(9-12). The alpha and beta chains form an alternating ring which encloses part of the gamma chain. CF(1) is attached to CF(0) by a central stalk formed by the gamma and epsilon chains, while a peripheral stalk is formed by the delta and b chains.

Its subcellular location is the cell inner membrane. The catalysed reaction is ATP + H2O + 4 H(+)(in) = ADP + phosphate + 5 H(+)(out). Produces ATP from ADP in the presence of a proton gradient across the membrane. The catalytic sites are hosted primarily by the beta subunits. The polypeptide is ATP synthase subunit beta (Polynucleobacter necessarius subsp. necessarius (strain STIR1)).